The sequence spans 192 residues: MTKDVVIEHGESSKAPLVPAPVAAGVGRAVSIADVFLRFLSIVATIASAISMGTTNETLPFFTQFIQFEAKYSDLPSFTFFVAANAVVCTYLVLSIPLSIVHIIRPRARYSRLILVFFDAVMLALLTAGASAAAAIVYLAHKGNVRANWFAICQQFDSFCERISGSLIGSFAAMVLLIVLIFLSAFALARRH.

The Cytoplasmic segment spans residues Met1 to Ala29. A helical transmembrane segment spans residues Val30–Ile50. The Extracellular segment spans residues Ser51–Thr79. Asn56 carries N-linked (GlcNAc...) asparagine glycosylation. A helical transmembrane segment spans residues Phe80–Ile100. Residues Val101–Arg112 lie on the Cytoplasmic side of the membrane. Residues Leu113 to Ala133 form a helical membrane-spanning segment. Topologically, residues Ala134 to Ser166 are extracellular. Residues Leu167–Ala187 traverse the membrane as a helical segment. Topologically, residues Leu188–His192 are cytoplasmic.

This sequence belongs to the Casparian strip membrane proteins (CASP) family. Homodimer and heterodimers.

It localises to the cell membrane. In terms of biological role, regulates membrane-cell wall junctions and localized cell wall deposition. Required for establishment of the Casparian strip membrane domain (CSD) and the subsequent formation of Casparian strips, a cell wall modification of the root endodermis that determines an apoplastic barrier between the intraorganismal apoplasm and the extraorganismal apoplasm and prevents lateral diffusion. The sequence is that of Casparian strip membrane protein 4 from Sorghum bicolor (Sorghum).